Consider the following 556-residue polypeptide: Protein F37C4.5 (556 aa).

At Ala2 the chain carries N-acetylalanine.

The polypeptide is Protein F37C4.5 (Caenorhabditis elegans).